The following is a 165-amino-acid chain: Sec-independent protein translocase protein TatB (165 aa).

A helical transmembrane segment spans residues 1 to 21 (MFDVSFTELIVIGVVALIVLG). Positions 67 to 84 (DSTAQDVNQSLRSATDSL) are enriched in polar residues. Residues 67–165 (DSTAQDVNQS…PKSPSTGNAT (99 aa)) are disordered. Low complexity predominate over residues 127 to 159 (KLPGTPATLPATAAAEPTPAAPAASQAEAPKSP).

This sequence belongs to the TatB family. In terms of assembly, the Tat system comprises two distinct complexes: a TatABC complex, containing multiple copies of TatA, TatB and TatC subunits, and a separate TatA complex, containing only TatA subunits. Substrates initially bind to the TatABC complex, which probably triggers association of the separate TatA complex to form the active translocon.

The protein resides in the cell inner membrane. In terms of biological role, part of the twin-arginine translocation (Tat) system that transports large folded proteins containing a characteristic twin-arginine motif in their signal peptide across membranes. Together with TatC, TatB is part of a receptor directly interacting with Tat signal peptides. TatB may form an oligomeric binding site that transiently accommodates folded Tat precursor proteins before their translocation. The protein is Sec-independent protein translocase protein TatB of Bordetella avium (strain 197N).